A 308-amino-acid polypeptide reads, in one-letter code: Ycf92-like protein (308 aa).

5 helical membrane-spanning segments follow: residues 41-61, 75-95, 153-173, 192-212, and 288-308; these read FANN…TLIA, LLTL…GLGV, ISTI…TTAP, IPVT…PLVL, and WLAI…GNQI.

The protein belongs to the ycf92 family.

It localises to the membrane. This is Ycf92-like protein from Nostoc sp. (strain PCC 7120 / SAG 25.82 / UTEX 2576).